The following is a 329-amino-acid chain: 3'-5' exonuclease (329 aa).

Residues 26 to 88 (EEKPKPKKVV…MADVGTPSPE (63 aa)) are disordered. The segment covering 46-65 (KNLDTPEIVNKENAEVENPP) has biased composition (basic and acidic residues). Phosphoserine is present on residues S78 and S86. The region spanning 130–288 (TEIVPMAFDM…IGQVIYREIE (159 aa)) is the 3'-5' exonuclease domain. Positions 138, 140, and 276 each coordinate Mg(2+).

It belongs to the WRNexo family.

Its subcellular location is the nucleus. Has exonuclease activity on both single-stranded and duplex templates bearing overhangs, but not blunt ended duplex DNA, and cleaves in a 3'-5' direction. Essential for the formation of DNA replication focal centers. Has an important role in maintaining genome stability. The protein is 3'-5' exonuclease of Drosophila mojavensis (Fruit fly).